Here is a 131-residue protein sequence, read N- to C-terminus: Small ribosomal subunit protein uS8 (131 aa).

The protein belongs to the universal ribosomal protein uS8 family. As to quaternary structure, part of the 30S ribosomal subunit. Contacts proteins S5 and S12.

Functionally, one of the primary rRNA binding proteins, it binds directly to 16S rRNA central domain where it helps coordinate assembly of the platform of the 30S subunit. The chain is Small ribosomal subunit protein uS8 from Mycoplasmopsis agalactiae (strain NCTC 10123 / CIP 59.7 / PG2) (Mycoplasma agalactiae).